A 346-amino-acid chain; its full sequence is L-threonine dehydratase catabolic TdcB (346 aa).

59 to 60 (FT) contacts AMP. Lys64 is modified (N6-(pyridoxal phosphate)lysine). Residues Gln94, 125–126 (GY), and Asn321 contribute to the AMP site.

It belongs to the serine/threonine dehydratase family. In the native structure, TdcB is in a dimeric form, whereas in the TdcB-AMP complex, it exists in a tetrameric form (dimer of dimers). It depends on pyridoxal 5'-phosphate as a cofactor.

The catalysed reaction is L-threonine = 2-oxobutanoate + NH4(+). The protein operates within amino-acid degradation; L-threonine degradation via propanoate pathway; propanoate from L-threonine: step 1/4. Its activity is regulated as follows. Each protein molecule can bind up to four molecules of AMP, which act as an allosteric activator to the enzyme. Its function is as follows. Catalyzes the anaerobic formation of alpha-ketobutyrate and ammonia from threonine in a two-step reaction. The first step involved a dehydration of threonine and a production of enamine intermediates (aminocrotonate), which tautomerizes to its imine form (iminobutyrate). Both intermediates are unstable and short-lived. The second step is the nonenzymatic hydrolysis of the enamine/imine intermediates to form 2-ketobutyrate and free ammonia. In the low water environment of the cell, the second step is accelerated by RidA. The sequence is that of L-threonine dehydratase catabolic TdcB (tdcB) from Staphylococcus aureus (strain Mu50 / ATCC 700699).